A 237-amino-acid polypeptide reads, in one-letter code: Ribonuclease PH (237 aa).

Residues Arg86 and 124–126 each bind phosphate; that span reads GTR.

This sequence belongs to the RNase PH family. As to quaternary structure, homohexameric ring arranged as a trimer of dimers.

It catalyses the reaction tRNA(n+1) + phosphate = tRNA(n) + a ribonucleoside 5'-diphosphate. Functionally, phosphorolytic 3'-5' exoribonuclease that plays an important role in tRNA 3'-end maturation. Removes nucleotide residues following the 3'-CCA terminus of tRNAs; can also add nucleotides to the ends of RNA molecules by using nucleoside diphosphates as substrates, but this may not be physiologically important. Probably plays a role in initiation of 16S rRNA degradation (leading to ribosome degradation) during starvation. This chain is Ribonuclease PH, found in Roseobacter denitrificans (strain ATCC 33942 / OCh 114) (Erythrobacter sp. (strain OCh 114)).